Here is a 138-residue protein sequence, read N- to C-terminus: MLIPRRVKHRKQHHPGRSGAATGGTKVSFGEYGIQALSPAYVTNRQIESARIAMTRHIKRGGKVWINIYPDRPLTKKPAETRMGSGKGSPEWWVANVKPGRVLFELSGVNEEVAREALRLAIHKLPLKARIVRREGGE.

Residues 1-16 are compositionally biased toward basic residues; it reads MLIPRRVKHRKQHHPG. Positions 1 to 24 are disordered; that stretch reads MLIPRRVKHRKQHHPGRSGAATGG.

This sequence belongs to the universal ribosomal protein uL16 family. As to quaternary structure, part of the 50S ribosomal subunit.

Its function is as follows. Binds 23S rRNA and is also seen to make contacts with the A and possibly P site tRNAs. This is Large ribosomal subunit protein uL16 from Paenarthrobacter aurescens (strain TC1).